Reading from the N-terminus, the 346-residue chain is D-alanine--D-alanine ligase (346 aa).

The region spanning 133–327 (KLYAKSVGVK…ALADQISLEK (195 aa)) is the ATP-grasp domain. An ATP-binding site is contributed by 159-211 (LSFPCIIKPARLGSSIGISIVKDEKDLEYAKDVGFEFDNDLVVEEFKNNIKEY). 3 residues coordinate Mg(2+): Asp-284, Glu-296, and Asn-298.

This sequence belongs to the D-alanine--D-alanine ligase family. Requires Mg(2+) as cofactor. Mn(2+) is required as a cofactor.

Its subcellular location is the cytoplasm. It catalyses the reaction 2 D-alanine + ATP = D-alanyl-D-alanine + ADP + phosphate + H(+). It participates in cell wall biogenesis; peptidoglycan biosynthesis. Its function is as follows. Cell wall formation. The sequence is that of D-alanine--D-alanine ligase from Campylobacter jejuni subsp. jejuni serotype O:2 (strain ATCC 700819 / NCTC 11168).